A 326-amino-acid polypeptide reads, in one-letter code: Aquaporin-3 (326 aa).

A run of 2 helical transmembrane segments spans residues 24-44 (LAEF…IITA) and 64-84 (LAFG…GISG). The NPA 1 signature appears at 88–90 (NPA). The helical transmembrane segment at 107–127 (LVYIFMQYMGAFFAASILYAV) threads the bilayer. The N-linked (GlcNAc...) asparagine glycan is linked to Asn-146. 2 helical membrane-spanning segments follow: residues 166 to 186 (IFDA…IIDP) and 196 to 216 (IPLY…YNAG). The NPA 2 signature appears at 220–222 (NPA). The helical transmembrane segment at 247–267 (LWWLVPVIGPHVGGLLGGVTY) threads the bilayer. A glycan (N-linked (GlcNAc...) asparagine) is linked at Asn-294.

The protein belongs to the MIP/aquaporin (TC 1.A.8) family.

It is found in the cell membrane. Aquaglyceroporin that may modulate the water content and osmolytes during anhydrobiosis. The protein is Aquaporin-3 of Milnesium tardigradum (Water bear).